The chain runs to 686 residues: Elongation factor G 2 (686 aa).

Residues 7–280 (TTVRNLGILA…AVVAYLPSPL (274 aa)) enclose the tr-type G domain. GTP-binding positions include 16-23 (AHVDAGKT), 80-84 (DTPGH), and 134-137 (NKMD).

Belongs to the TRAFAC class translation factor GTPase superfamily. Classic translation factor GTPase family. EF-G/EF-2 subfamily.

It localises to the cytoplasm. In terms of biological role, catalyzes the GTP-dependent ribosomal translocation step during translation elongation. During this step, the ribosome changes from the pre-translocational (PRE) to the post-translocational (POST) state as the newly formed A-site-bound peptidyl-tRNA and P-site-bound deacylated tRNA move to the P and E sites, respectively. Catalyzes the coordinated movement of the two tRNA molecules, the mRNA and conformational changes in the ribosome. This Streptomyces coelicolor (strain ATCC BAA-471 / A3(2) / M145) protein is Elongation factor G 2 (fusB).